A 466-amino-acid polypeptide reads, in one-letter code: Soluble pyridine nucleotide transhydrogenase (466 aa).

36 to 45 (ERYHNVGGGC) contributes to the FAD binding site.

The protein belongs to the class-I pyridine nucleotide-disulfide oxidoreductase family. Requires FAD as cofactor.

The protein resides in the cytoplasm. The catalysed reaction is NAD(+) + NADPH = NADH + NADP(+). Its function is as follows. Conversion of NADPH, generated by peripheral catabolic pathways, to NADH, which can enter the respiratory chain for energy generation. This Salmonella paratyphi A (strain ATCC 9150 / SARB42) protein is Soluble pyridine nucleotide transhydrogenase.